A 497-amino-acid polypeptide reads, in one-letter code: Aldehyde dehydrogenase (497 aa).

241-246 serves as a coordination point for NAD(+); that stretch reads GSTVVG. Glu264 functions as the Proton acceptor in the catalytic mechanism. Cys298 serves as the catalytic Nucleophile.

The protein belongs to the aldehyde dehydrogenase family.

The protein localises to the cytoplasm. The enzyme catalyses an aldehyde + NAD(+) + H2O = a carboxylate + NADH + 2 H(+). It participates in alcohol metabolism; ethanol degradation; acetate from ethanol: step 2/2. This chain is Aldehyde dehydrogenase (ALTA10), found in Alternaria alternata (Alternaria rot fungus).